We begin with the raw amino-acid sequence, 176 residues long: Disulfide bond formation protein B (176 aa).

Topologically, residues 1–14 (MLRFLNRCSRGRGA) are cytoplasmic. Residues 15 to 31 (WLLLAFTALALELTALY) traverse the membrane as a helical segment. Topologically, residues 32–49 (FQHVMLLKPCVLCIYQRS) are periplasmic. A disulfide bond links Cys41 and Cys44. Residues 50-65 (ALWGVFAAGIVGAIAP) traverse the membrane as a helical segment. At 66-71 (SSLLRY) the chain is on the cytoplasmic side. A helical membrane pass occupies residues 72–89 (PAIALWIYSSYEGIRLAW). The Periplasmic portion of the chain corresponds to 90–144 (KHTDILLNPSPFTTCDFFVSFPSWLPLDKWLPAIFNATGDCSERQWSFLSMEMPQ). The cysteines at positions 104 and 130 are disulfide-linked. The helical transmembrane segment at 145–163 (WLLGIFAAYLLIAVLVLIA) threads the bilayer. The Cytoplasmic portion of the chain corresponds to 164–176 (QPFRSKRRDLFSR).

Belongs to the DsbB family.

It localises to the cell inner membrane. Its function is as follows. Required for disulfide bond formation in some periplasmic proteins. Acts by oxidizing the DsbA protein. The polypeptide is Disulfide bond formation protein B (Pectobacterium atrosepticum (strain SCRI 1043 / ATCC BAA-672) (Erwinia carotovora subsp. atroseptica)).